The chain runs to 74 residues: Conotoxin ArMKLT2-041 (74 aa).

The signal sequence occupies residues 1 to 22; sequence MKLTCVLIVAVLFLTACQLIAA. Residues 23-46 constitute a propeptide that is removed on maturation; the sequence is DDSRDLQKFPRRKMRDGMLNTKNT. Position 49 is a pyrrolidone carboxylic acid (Gln49). 3 disulfide bridges follow: Cys50–Cys65, Cys57–Cys68, and Cys64–Cys73.

This sequence belongs to the conotoxin O1 superfamily. Expressed by the venom duct.

It localises to the secreted. This chain is Conotoxin ArMKLT2-041, found in Conus arenatus (Sand-dusted cone).